A 760-amino-acid polypeptide reads, in one-letter code: GLC7-interacting protein 4 (760 aa).

Disordered stretches follow at residues 449–573 and 593–626; these read KKKP…SLQS and KSAS…SSST. 2 stretches are compositionally biased toward low complexity: residues 454–474 and 494–506; these read ITKL…ASPS and SSRS…VRTT. Phosphoserine occurs at positions 497 and 501. Positions 512-525 are enriched in basic and acidic residues; it reads AETKKSVVSPEKRK. The segment covering 534 to 554 has biased composition (polar residues); sequence SSSLQSYTNKQQTSYLNSTRH. Composition is skewed to low complexity over residues 561–573 and 594–626; these read SKLN…SLQS and SAST…SSST. Ser609 carries the phosphoserine modification.

This sequence belongs to the GIP4 family. Interacts with GLC7.

Its subcellular location is the cytoplasm. GLC7 phosphatase-regulatory protein involved in GLC7 subcellular redistribution and chromosome segregation. The sequence is that of GLC7-interacting protein 4 (GIP4) from Saccharomyces cerevisiae (strain ATCC 204508 / S288c) (Baker's yeast).